The sequence spans 394 residues: Aromatic aminotransferase ISS1 (394 aa).

An N-acetylglycine modification is found at Gly-2. Substrate is bound at residue Gly-38. Pyridoxal 5'-phosphate-binding positions include Tyr-64, 98 to 99, Tyr-123, Asn-176, Tyr-207, and 230 to 232; these read AN and SFS. The substrate site is built by Tyr-123 and Asn-176. The residue at position 233 (Lys-233) is an N6-(pyridoxal phosphate)lysine. Arg-241 provides a ligand contact to pyridoxal 5'-phosphate. Arg-362 and Arg-374 together coordinate substrate.

This sequence belongs to the class-I pyridoxal-phosphate-dependent aminotransferase family. In terms of assembly, homodimer. The cofactor is pyridoxal 5'-phosphate. Expressed in roots, cotyledons and flowers.

The protein localises to the cytoplasm. The enzyme catalyses a 2-oxocarboxylate + L-methionine = 4-methylsulfanyl-2-oxobutanoate + an L-alpha-amino acid. The catalysed reaction is L-tryptophan + 2-oxoglutarate = indole-3-pyruvate + L-glutamate. It carries out the reaction L-tyrosine + 2-oxoglutarate = 3-(4-hydroxyphenyl)pyruvate + L-glutamate. Coordinates and prevents auxin (IAA) and ethylene biosynthesis, thus regulating auxin homeostasis in young seedlings. Shows aminotransferase activity with methionine; can use the ethylene biosynthetic intermediate L-methionine (L-Met) as an amino donor and the auxin biosynthetic intermediate, indole-3-pyruvic acid (3-IPA) as an amino acceptor to produce L-tryptophan (L-Trp) and 2-oxo-4-methylthiobutyric acid (KMBA). Can also use tryptophan (Trp), phenylalanine (Phe), and tyrosine (Tyr) as substrates. Regulates tryptophan (Trp) homeostasis and catabolism in mature plants. Also possibly involved in the metabolism of other aromatic amino acids and phenylpropanoid homeostasis. This is Aromatic aminotransferase ISS1 from Arabidopsis thaliana (Mouse-ear cress).